We begin with the raw amino-acid sequence, 347 residues long: GMP reductase (347 aa).

108 to 131 (ADFEKTKQILDLNPALNFVCIDVA) is a binding site for NADP(+). K(+) contacts are provided by glycine 181 and glycine 183. Residue cysteine 186 is the Thioimidate intermediate of the active site. 216–239 (IVSDGGCTTPGDVAKAFGGGADFV) contributes to the NADP(+) binding site.

The protein belongs to the IMPDH/GMPR family. GuaC type 1 subfamily. In terms of assembly, homotetramer.

The enzyme catalyses IMP + NH4(+) + NADP(+) = GMP + NADPH + 2 H(+). In terms of biological role, catalyzes the irreversible NADPH-dependent deamination of GMP to IMP. It functions in the conversion of nucleobase, nucleoside and nucleotide derivatives of G to A nucleotides, and in maintaining the intracellular balance of A and G nucleotides. The protein is GMP reductase of Escherichia coli (strain SMS-3-5 / SECEC).